The primary structure comprises 338 residues: Beta-ketoacyl-[acyl-carrier-protein] synthase III (338 aa).

Catalysis depends on residues Cys119 and His261. Residues 262-266 (QANQR) form an ACP-binding region. Residue Asn291 is part of the active site.

Belongs to the thiolase-like superfamily. FabH family. Homodimer.

The protein localises to the cytoplasm. The enzyme catalyses malonyl-[ACP] + acetyl-CoA + H(+) = 3-oxobutanoyl-[ACP] + CO2 + CoA. Its pathway is lipid metabolism; fatty acid biosynthesis. Functionally, catalyzes the condensation reaction of fatty acid synthesis by the addition to an acyl acceptor of two carbons from malonyl-ACP. Catalyzes the first condensation reaction which initiates fatty acid synthesis and may therefore play a role in governing the total rate of fatty acid production. Possesses both acetoacetyl-ACP synthase and acetyl transacylase activities. Its substrate specificity determines the biosynthesis of branched-chain and/or straight-chain of fatty acids. This is Beta-ketoacyl-[acyl-carrier-protein] synthase III from Prochlorococcus marinus (strain SARG / CCMP1375 / SS120).